Here is a 251-residue protein sequence, read N- to C-terminus: 3-deoxy-manno-octulosonate cytidylyltransferase (251 aa).

The protein belongs to the KdsB family.

The protein resides in the cytoplasm. The catalysed reaction is 3-deoxy-alpha-D-manno-oct-2-ulosonate + CTP = CMP-3-deoxy-beta-D-manno-octulosonate + diphosphate. It functions in the pathway nucleotide-sugar biosynthesis; CMP-3-deoxy-D-manno-octulosonate biosynthesis; CMP-3-deoxy-D-manno-octulosonate from 3-deoxy-D-manno-octulosonate and CTP: step 1/1. It participates in bacterial outer membrane biogenesis; lipopolysaccharide biosynthesis. Functionally, activates KDO (a required 8-carbon sugar) for incorporation into bacterial lipopolysaccharide in Gram-negative bacteria. This Rhizobium etli (strain CIAT 652) protein is 3-deoxy-manno-octulosonate cytidylyltransferase.